Reading from the N-terminus, the 130-residue chain is Small ribosomal subunit protein uS11 (130 aa).

Belongs to the universal ribosomal protein uS11 family. Part of the 30S ribosomal subunit. Interacts with proteins S7 and S18. Binds to IF-3.

Located on the platform of the 30S subunit, it bridges several disparate RNA helices of the 16S rRNA. Forms part of the Shine-Dalgarno cleft in the 70S ribosome. The protein is Small ribosomal subunit protein uS11 of Psychrobacter sp. (strain PRwf-1).